Here is a 407-residue protein sequence, read N- to C-terminus: Probable NADPH dehydrogenase (407 aa).

Positions 49 and 124 each coordinate FMN. 201-204 contributes to the substrate binding site; sequence HGAH. The active-site Proton donor is the tyrosine 206. The FMN site is built by arginine 254 and arginine 357.

Belongs to the NADH:flavin oxidoreductase/NADH oxidase family. The cofactor is FMN.

The catalysed reaction is A + NADPH + H(+) = AH2 + NADP(+). Its function is as follows. Oxidoreductase that binds mammalian estrogens with high affinity. The protein is Probable NADPH dehydrogenase of Candida albicans (Yeast).